A 174-amino-acid chain; its full sequence is Myeloid-derived growth factor (174 aa).

The first 32 residues, 1 to 32 (MAAPSGRRNGSGGANLWVSLLLAAAALRPVET), serve as a signal peptide directing secretion.

This sequence belongs to the MYDGF family.

Its subcellular location is the secreted. It is found in the endoplasmic reticulum-Golgi intermediate compartment. The protein resides in the endoplasmic reticulum. The protein localises to the golgi apparatus. Bone marrow-derived monocyte and paracrine-acting protein that promotes cardiac myocyte survival and adaptive angiogenesis for cardiac protection and/or repair after myocardial infarction (MI). Stimulates endothelial cell proliferation through a MAPK1/3-, STAT3- and CCND1-mediated signaling pathway. Inhibits cardiac myocyte apoptosis in a PI3K/AKT-dependent signaling pathway. The polypeptide is Myeloid-derived growth factor (Bos taurus (Bovine)).